The sequence spans 512 residues: Glycerol kinase (512 aa).

T13 contributes to the ADP binding site. Positions 13, 14, and 15 each coordinate ATP. T13 is a sn-glycerol 3-phosphate binding site. Residue R17 participates in ADP binding. Positions 83, 84, 135, and 252 each coordinate sn-glycerol 3-phosphate. Positions 83, 84, 135, 252, and 253 each coordinate glycerol. The ADP site is built by T274 and G318. T274, G318, Q322, and G419 together coordinate ATP. Residues G419 and N423 each coordinate ADP.

This sequence belongs to the FGGY kinase family.

It carries out the reaction glycerol + ATP = sn-glycerol 3-phosphate + ADP + H(+). It participates in polyol metabolism; glycerol degradation via glycerol kinase pathway; sn-glycerol 3-phosphate from glycerol: step 1/1. Inhibited by fructose 1,6-bisphosphate (FBP). Key enzyme in the regulation of glycerol uptake and metabolism. Catalyzes the phosphorylation of glycerol to yield sn-glycerol 3-phosphate. The chain is Glycerol kinase from Corynebacterium kroppenstedtii (strain DSM 44385 / JCM 11950 / CIP 105744 / CCUG 35717).